The sequence spans 415 residues: Tyrosine--tRNA ligase (415 aa).

Positions 54-63 match the 'HIGH' region motif; it reads PTGSNIHLGH. A 'KMSKS' region motif is present at residues 248–252; that stretch reads KMSKS. K251 is an ATP binding site. One can recognise an S4 RNA-binding domain in the interval 351–415; the sequence is AKAFYLLSAV…GKKTFRRLTA (65 aa).

This sequence belongs to the class-I aminoacyl-tRNA synthetase family. TyrS type 2 subfamily. Homodimer.

It is found in the cytoplasm. It carries out the reaction tRNA(Tyr) + L-tyrosine + ATP = L-tyrosyl-tRNA(Tyr) + AMP + diphosphate + H(+). Catalyzes the attachment of tyrosine to tRNA(Tyr) in a two-step reaction: tyrosine is first activated by ATP to form Tyr-AMP and then transferred to the acceptor end of tRNA(Tyr). The protein is Tyrosine--tRNA ligase of Parasynechococcus marenigrum (strain WH8102).